The primary structure comprises 280 residues: Phosphatidylglycerol--prolipoprotein diacylglyceryl transferase (280 aa).

Transmembrane regions (helical) follow at residues 26-46 (LAIH…WFYA), 71-91 (FILW…ILFY), 106-126 (IWNG…AMIL), and 132-152 (GIPV…GLLF). R154 contributes to the a 1,2-diacyl-sn-glycero-3-phospho-(1'-sn-glycerol) binding site. Helical transmembrane passes span 193–213 (GLEG…FKAL), 217–237 (GTVT…VEFF), and 251–271 (WLTM…WAVL).

It belongs to the Lgt family.

Its subcellular location is the cell inner membrane. The catalysed reaction is L-cysteinyl-[prolipoprotein] + a 1,2-diacyl-sn-glycero-3-phospho-(1'-sn-glycerol) = an S-1,2-diacyl-sn-glyceryl-L-cysteinyl-[prolipoprotein] + sn-glycerol 1-phosphate + H(+). It participates in protein modification; lipoprotein biosynthesis (diacylglyceryl transfer). Its function is as follows. Catalyzes the transfer of the diacylglyceryl group from phosphatidylglycerol to the sulfhydryl group of the N-terminal cysteine of a prolipoprotein, the first step in the formation of mature lipoproteins. The chain is Phosphatidylglycerol--prolipoprotein diacylglyceryl transferase from Agrobacterium fabrum (strain C58 / ATCC 33970) (Agrobacterium tumefaciens (strain C58)).